We begin with the raw amino-acid sequence, 1266 residues long: Rho GTPase-activating protein 29 (1266 aa).

A phosphoserine mark is found at S166, S171, S174, and S185. The region spanning I187–E457 is the F-BAR domain. The stretch at R291–V413 forms a coiled coil. S496, S516, and S549 each carry phosphoserine. The segment covering S538–S556 has biased composition (low complexity). The tract at residues S538–G596 is disordered. The segment at T609 to C654 adopts a Phorbol-ester/DAG-type zinc-finger fold. One can recognise a Rho-GAP domain in the interval A668–F883. 3 positions are modified to phosphoserine: S915, S951, and S1023. 3 disordered regions span residues A1033–K1054, V1114–P1153, and V1222–R1248. The segment covering S1115 to A1127 has biased composition (polar residues). Residues A1132–S1148 are compositionally biased toward basic and acidic residues. 2 positions are modified to phosphoserine: S1149 and S1151. The segment at P1263 to V1266 is interaction with PTPN13/PTPL1.

Interacts with PTPN13/PTPL1. Interacts with RAP2A via its coiled coil domain. Interacts with RASIP1.

GTPase activator for the Rho-type GTPases by converting them to an inactive GDP-bound state. Has strong activity toward RHOA, and weaker activity toward RAC1 and CDC42. May act as a specific effector of RAP2A to regulate Rho. In concert with RASIP1, suppresses RhoA signaling and dampens ROCK and MYH9 activities in endothelial cells and plays an essential role in blood vessel tubulogenesis. The sequence is that of Rho GTPase-activating protein 29 (Arhgap29) from Rattus norvegicus (Rat).